Here is an 849-residue protein sequence, read N- to C-terminus: MFSKNKHNTKFIVIACVIVVLILILFCFDFQNIQEIIETINQLTNNQNPSKNTASEMSGMRRKIIFFIFNFFGKIILASFIISFLLHIKKNAQIKRLKNKLSLWSKLSFHVSQIGEEVLNELPIGIVLIDISSQEIQWLNPYASFILKNPEINSPLTQINENMAQLISTSDTIPKTIITLKNQKFECFYKKDLSVFYLFDATEKEQIKHLFLQKTLAIAMIAFDNLAESLIRYDLSEQSQIQGEYLSALSDYIEPYESYLKQLIDDRFLLLLNRQNLDKMLENKFSILDTIRNISHKYQLKVTLSMGIACWNLSYEKLATYSQNAIELAQKRGGDQVVVNIENEKIKYFGAKIASLSKQSKVHARINAQNLVDILKKNPHCFIMGHTHTDLDALGSVIAFYKIAATIHPENNNYIILDEEKLDKSLIPVYHQLIKTESKKTLNIITTQQASKMIKDNSLIAVLDTQTKDMLNSPELLSLTPNIVVVDHHRATEEIIPSIFSYVESSASSTVELLVEVMGFLEKEVHITAFEASIMYAGILIDTNAFIYRTSSRTFEVASKLKDLGADAIEVKSWLRKDFDKVLEINKLISEMEIFMDRFAIIQSSEIYENRSFLAQVAESVLNIQNVDAAFMIAKIADNKIAISARSYNEINVQTIMEQMEGGGHLNSAATQLEGTNIKTVTDTLKHFLKLEYEKGEKNMEIILLTDISNKGKKHEIIKVNNGYGNFLIQNKKALLADKANLAVIKQTQILEQEQKRNHELLMQKLKQEIDDKKITLDIQLGPKGKIYGKITLKQISEEFLKVHNITLDRKKISLESEIIAIGIYPVDVFLTDQIKATFFLNVTERKSK.

The tract at residues 1–680 (MFSKNKHNTK…TQLEGTNIKT (680 aa)) is unknown. 2 consecutive transmembrane segments (helical) span residues 11–31 (FIVI…FDFQ) and 64–84 (IIFF…IISF). Positions 214–342 (KTLAIAMIAF…GGDQVVVNIE (129 aa)) constitute a GGDEF domain. The tract at residues 681 to 849 (VTDTLKHFLK…FLNVTERKSK (169 aa)) is large ribosomal subunit protein bL9.

It belongs to the bacterial ribosomal protein bL9 family.

The protein resides in the cell membrane. Functionally, binds to the 23S rRNA. This is Membrane protein-large ribosomal subunit bL9 fusion protein from Aster yellows witches'-broom phytoplasma (strain AYWB).